Reading from the N-terminus, the 286-residue chain is Nucleotide-binding protein HCH_05324 (286 aa).

ATP is bound at residue 8–15; that stretch reads GRSGSGKS. 60-63 serves as a coordination point for GTP; it reads DARN.

Belongs to the RapZ-like family.

Functionally, displays ATPase and GTPase activities. This is Nucleotide-binding protein HCH_05324 from Hahella chejuensis (strain KCTC 2396).